The chain runs to 296 residues: Lipoyl synthase (296 aa).

Cysteine 38, cysteine 43, cysteine 49, cysteine 64, cysteine 68, cysteine 71, and serine 279 together coordinate [4Fe-4S] cluster. One can recognise a Radical SAM core domain in the interval 50 to 268; it reads WDGGCLTFMV…AEYGRSLGFK (219 aa).

This sequence belongs to the radical SAM superfamily. Lipoyl synthase family. It depends on [4Fe-4S] cluster as a cofactor.

Its subcellular location is the cytoplasm. It catalyses the reaction [[Fe-S] cluster scaffold protein carrying a second [4Fe-4S](2+) cluster] + N(6)-octanoyl-L-lysyl-[protein] + 2 oxidized [2Fe-2S]-[ferredoxin] + 2 S-adenosyl-L-methionine + 4 H(+) = [[Fe-S] cluster scaffold protein] + N(6)-[(R)-dihydrolipoyl]-L-lysyl-[protein] + 4 Fe(3+) + 2 hydrogen sulfide + 2 5'-deoxyadenosine + 2 L-methionine + 2 reduced [2Fe-2S]-[ferredoxin]. The protein operates within protein modification; protein lipoylation via endogenous pathway; protein N(6)-(lipoyl)lysine from octanoyl-[acyl-carrier-protein]: step 2/2. Catalyzes the radical-mediated insertion of two sulfur atoms into the C-6 and C-8 positions of the octanoyl moiety bound to the lipoyl domains of lipoate-dependent enzymes, thereby converting the octanoylated domains into lipoylated derivatives. The polypeptide is Lipoyl synthase (Methanocella arvoryzae (strain DSM 22066 / NBRC 105507 / MRE50)).